The primary structure comprises 218 residues: Small ribosomal subunit protein mS34 (218 aa).

A disordered region spans residues 178–218 (RQKNGDPSTEEPMLSLERIRTDPWDYPENQEAKKKTKGTAV).

This sequence belongs to the mitochondrion-specific ribosomal protein mS34 family. As to quaternary structure, component of the mitochondrial ribosome small subunit (28S) which comprises a 12S rRNA and about 30 distinct proteins.

The protein localises to the mitochondrion. Its function is as follows. Required for mitochondrial translation, plays a role in maintaining the stability of the small ribosomal subunit and the 12S rRNA that are required for mitoribosome formation. This is Small ribosomal subunit protein mS34 from Bos taurus (Bovine).